We begin with the raw amino-acid sequence, 662 residues long: UvrABC system protein B (662 aa).

Residues 25 to 412 form the Helicase ATP-binding domain; it reads EGIEKGLKMQ…SQKIVEQIIR (388 aa). 38–45 provides a ligand contact to ATP; it reads GVTGSGKT. Residues 91–114 carry the Beta-hairpin motif; that stretch reads YYDYYQPEAYLPATDTYIEKDSAI. One can recognise a Helicase C-terminal domain in the interval 429–595; that stretch reads QVDDLYGEIK…TVQKAVRDVI (167 aa). The 36-residue stretch at 622–657 folds into the UVR domain; the sequence is KQYVEKLTREMKEAAKALEFEKAAMLRDLIIELRAQ.

This sequence belongs to the UvrB family. As to quaternary structure, forms a heterotetramer with UvrA during the search for lesions. Interacts with UvrC in an incision complex.

It is found in the cytoplasm. The UvrABC repair system catalyzes the recognition and processing of DNA lesions. A damage recognition complex composed of 2 UvrA and 2 UvrB subunits scans DNA for abnormalities. Upon binding of the UvrA(2)B(2) complex to a putative damaged site, the DNA wraps around one UvrB monomer. DNA wrap is dependent on ATP binding by UvrB and probably causes local melting of the DNA helix, facilitating insertion of UvrB beta-hairpin between the DNA strands. Then UvrB probes one DNA strand for the presence of a lesion. If a lesion is found the UvrA subunits dissociate and the UvrB-DNA preincision complex is formed. This complex is subsequently bound by UvrC and the second UvrB is released. If no lesion is found, the DNA wraps around the other UvrB subunit that will check the other stand for damage. The polypeptide is UvrABC system protein B (Carboxydothermus hydrogenoformans (strain ATCC BAA-161 / DSM 6008 / Z-2901)).